A 202-amino-acid polypeptide reads, in one-letter code: Small ribosomal subunit protein uS4 (202 aa).

Residues 1–13 (MSRYRGPRLRITR) are compositionally biased toward basic residues. Positions 1-43 (MSRYRGPRLRITRRLGDLPGLTRKAAKRSHPPGQHGQARRKRS) are disordered. The 63-residue stretch at 90-152 (NRLDNVCFRL…KASKQLAQAN (63 aa)) folds into the S4 RNA-binding domain.

The protein belongs to the universal ribosomal protein uS4 family. Part of the 30S ribosomal subunit. Contacts protein S5. The interaction surface between S4 and S5 is involved in control of translational fidelity.

Functionally, one of the primary rRNA binding proteins, it binds directly to 16S rRNA where it nucleates assembly of the body of the 30S subunit. In terms of biological role, with S5 and S12 plays an important role in translational accuracy. This Prochlorococcus marinus (strain NATL2A) protein is Small ribosomal subunit protein uS4.